A 555-amino-acid polypeptide reads, in one-letter code: MRVLFIHPNYHSGGAEIAGNWPPAWVAYLAGYLKAGGYTDVIFVDAMTNDLSEDQVREKITTLKPDIVGCTAITPAIYKAERTLQIAKEVNPDIVTVLGGIHGTFMYPQVLKEAPWIDAIVRGEGEQVMLNLVTAVDQGRFMADRNCVNGIAYAAPDGKVVATPAEPPIEDLDRITPDWGILEWEKYIYIPMNKRVAIPNFARGCPFTCSFCSQWKFWRDYRIRDPKKVVDEIEVLVKQHDVGFFILADEEPTIHRKKFIEFCEELIKRDLGVLWGINTRVTDILRDEKLLPLFRKAGLIHVSLGTEAAAQLKLDMVNKETTIEQNKRAIQLLKDNGIVTEAQFIVGLENETAETLEETYKMARDWNPDMANWAMYTPWPFSDLFQELGDKVEVFDFEKYNFVTPIMKPDAMDRGELLDRVMSNYRRFFMNKAFLQYPFTKDKERRKYLMGCLKAFLKSGFERKFYDLGRVGYWGPQTKKTVNFSFDKNRRIDAQTADELSRVDDGWVTMHGPKIEMRRRKGDDNFEIAKAAMACGGGTEQLTEEQQAATEVRAS.

Residues 9-143 form the B12-binding domain; it reads NYHSGGAEIA…TAVDQGRFMA (135 aa). The 226-residue stretch at 191-416 folds into the Radical SAM core domain; that stretch reads PMNKRVAIPN…MKPDAMDRGE (226 aa). The [4Fe-4S] cluster site is built by Cys-205, Cys-209, and Cys-212.

This sequence belongs to the BchE family. The cofactor is [4Fe-4S] cluster. Adenosylcob(III)alamin serves as cofactor.

The catalysed reaction is Mg-protoporphyrin IX 13-monomethyl ester + 3 S-adenosyl-L-methionine + H2O = 3,8-divinyl protochlorophyllide a + 3 5'-deoxyadenosine + 3 L-methionine + 4 H(+). It participates in porphyrin-containing compound metabolism; bacteriochlorophyll biosynthesis (light-independent). Involved in the tetrapyrrole biosynthetic pathways leading to chlorophyll and bacteriochlorophyll (BChl). Catalyzes the anaerobic formation of the isocyclic ring (E-ring) in Mg-protoporphyrin monomethyl ester (MPE) to yield protochlorophyllide a (PChlide a) via a six-electron oxidation and the formation of an oxo group at position C13 using oxygen from a water molecule. The sequence is that of Anaerobic magnesium-protoporphyrin IX monomethyl ester cyclase (bchE) from Rubrivivax gelatinosus (Rhodocyclus gelatinosus).